We begin with the raw amino-acid sequence, 337 residues long: Anthranilate phosphoribosyltransferase (337 aa).

5-phospho-alpha-D-ribose 1-diphosphate-binding positions include Gly-80, Gly-83 to Asp-84, Thr-88, Asn-90 to Thr-93, Lys-108 to Ser-116, and Ser-120. Residue Gly-80 participates in anthranilate binding. Residue Ser-92 coordinates Mg(2+). Anthranilate is bound at residue Asn-111. Arg-166 provides a ligand contact to anthranilate. Residues Asp-224 and Glu-225 each contribute to the Mg(2+) site.

The protein belongs to the anthranilate phosphoribosyltransferase family. As to quaternary structure, homodimer. Mg(2+) serves as cofactor.

The catalysed reaction is N-(5-phospho-beta-D-ribosyl)anthranilate + diphosphate = 5-phospho-alpha-D-ribose 1-diphosphate + anthranilate. It functions in the pathway amino-acid biosynthesis; L-tryptophan biosynthesis; L-tryptophan from chorismate: step 2/5. Its function is as follows. Catalyzes the transfer of the phosphoribosyl group of 5-phosphorylribose-1-pyrophosphate (PRPP) to anthranilate to yield N-(5'-phosphoribosyl)-anthranilate (PRA). The chain is Anthranilate phosphoribosyltransferase from Anaeromyxobacter sp. (strain Fw109-5).